The sequence spans 208 residues: Sodium/potassium-transporting ATPase subunit beta-1-interacting protein 2 (208 aa).

The next 4 helical transmembrane spans lie at 1 to 23, 35 to 55, 62 to 82, and 153 to 173; these read MGYC…CVLE, APIL…FGTI, ITGY…VICF, and LQIV…KCIT.

The protein belongs to the NKAIN family. In terms of assembly, interacts with ATP1B1. In terms of tissue distribution, expressed in fetal brain. Weakly expressed in adult brain and thymus. Not expressed in any other normal tissue examined.

The protein localises to the cell membrane. In Homo sapiens (Human), this protein is Sodium/potassium-transporting ATPase subunit beta-1-interacting protein 2 (NKAIN2).